Reading from the N-terminus, the 215-residue chain is Mediator of RNA polymerase II transcription subunit 8 (215 aa).

Positions 27 to 89 form a coiled coil; it reads LDALRMKFSQ…YEETLDATVA (63 aa).

It belongs to the Mediator complex subunit 8 family. In terms of assembly, component of the Mediator complex.

It localises to the nucleus. In terms of biological role, component of the Mediator complex, a coactivator involved in the regulated transcription of nearly all RNA polymerase II-dependent genes. Mediator functions as a bridge to convey information from gene-specific regulatory proteins to the basal RNA polymerase II transcription machinery. Mediator is recruited to promoters by direct interactions with regulatory proteins and serves as a scaffold for the assembly of a functional preinitiation complex with RNA polymerase II and the general transcription factors. This Kluyveromyces lactis (strain ATCC 8585 / CBS 2359 / DSM 70799 / NBRC 1267 / NRRL Y-1140 / WM37) (Yeast) protein is Mediator of RNA polymerase II transcription subunit 8 (MED8).